The following is a 257-amino-acid chain: Ribonuclease HII (257 aa).

Residues 72 to 257 (TYIAGIDEVG…FAPIKDMIQK (186 aa)) form the RNase H type-2 domain. A divalent metal cation-binding residues include Asp-78, Glu-79, and Asp-170.

Belongs to the RNase HII family. It depends on Mn(2+) as a cofactor. Mg(2+) is required as a cofactor.

It localises to the cytoplasm. The catalysed reaction is Endonucleolytic cleavage to 5'-phosphomonoester.. In terms of biological role, endonuclease that specifically degrades the RNA of RNA-DNA hybrids. In Bacillus thuringiensis (strain Al Hakam), this protein is Ribonuclease HII.